We begin with the raw amino-acid sequence, 301 residues long: Uricase (301 aa).

Residues lysine 11 and threonine 58 each act as charge relay system in the active site. 7 residues coordinate urate: threonine 58, aspartate 59, phenylalanine 160, arginine 177, valine 228, glutamine 229, and asparagine 255. Histidine 257 serves as the catalytic Charge relay system. A Microbody targeting signal motif is present at residues 299-301 (AKL).

This sequence belongs to the uricase family.

Its subcellular location is the peroxisome. The catalysed reaction is urate + O2 + H2O = 5-hydroxyisourate + H2O2. The protein operates within purine metabolism; urate degradation; (S)-allantoin from urate: step 1/3. Its function is as follows. Catalyzes the oxidation of uric acid to 5-hydroxyisourate, which is further processed to form (S)-allantoin. The sequence is that of Uricase (uaZ) from Emericella nidulans (strain FGSC A4 / ATCC 38163 / CBS 112.46 / NRRL 194 / M139) (Aspergillus nidulans).